We begin with the raw amino-acid sequence, 601 residues long: COP9 signalosome complex subunit 1 (601 aa).

The segment covering 1–10 (MQNELLDDPM) has biased composition (acidic residues). Disordered stretches follow at residues 1–54 (MQNE…LDNP) and 268–294 (DADDAEKNSQQSQQAPPQRGENAPYMV). Residues 14–24 (APAAEAAAADE) show a composition bias toward low complexity. The 163-residue stretch at 338–500 (TILQIKTECL…GIVRILDERD (163 aa)) folds into the PCI domain. The tract at residues 535–581 (SISDKETRPKRKNQKESAKFDRNFGGIDVDEDPRGIAGPSGLSDDFN) is disordered.

The protein belongs to the CSN1 family. In terms of assembly, component of the CSN complex, probably composed of csn-1, csn-2, csn-3, csn-4, csn-5, csn-6 and csn-7. Within the complex it probably interacts directly with csn-2, csn-4 and csn-5. May interact with itself. Interacts with rbx-1.

Its subcellular location is the cytoplasm. It localises to the nucleus. Functionally, essential component of the COP9 signalosome complex (CSN), a complex involved in various cellular and developmental processes. The CSN complex is an essential regulator of the ubiquitin (Ubl) conjugation pathway by mediating the deneddylation of the cullin subunits of the SCF-type E3 ligase complexes, leading to decrease the Ubl ligase activity of SCF. The CSN complex plays an essential role in embryogenesis and oogenesis and is required to regulate microtubule stability in the early embryo. Mediates mei-3/katanin targeting for degradation at the meiosis to mitosis transition via deneddylation of cul-3. The chain is COP9 signalosome complex subunit 1 (csn-1) from Caenorhabditis elegans.